An 84-amino-acid polypeptide reads, in one-letter code: uncharacterized protein (84 aa).

The helical transmembrane segment at 7-23 threads the bilayer; the sequence is AFSGVIALYGGYLYLRL.

The protein resides in the membrane. This is an uncharacterized protein from Haemophilus influenzae (strain ATCC 51907 / DSM 11121 / KW20 / Rd).